A 2208-amino-acid chain; its full sequence is RNA-directed RNA polymerase L (2208 aa).

Residues 26–284 are endonuclease; the sequence is KEALLSQVEV…SHAGTTVPEC (259 aa). Glu51, Asp89, and Glu102 together coordinate Mn(2+). Lys115 is an active-site residue. Positions 1172–1370 constitute a RdRp catalytic domain; it reads CDMKMAVNNG…FLSSKLNKFV (199 aa). Residue Asp1330 coordinates Mg(2+).

Belongs to the Bunyavirales RNA polymerase family. As to quaternary structure, homomultimer; the oligomeric structure is essential for the polymerase activity. Interacts with nucleoprotein N. Interacts with protein Z; this interaction inhibits viral transcription and replication, Z partially blocks the product exit tunnel for the releasing nascent RNA product. The cofactor is Mn(2+). Requires Mg(2+) as cofactor.

Its subcellular location is the virion. It localises to the host cytoplasm. It carries out the reaction RNA(n) + a ribonucleoside 5'-triphosphate = RNA(n+1) + diphosphate. Functionally, RNA-dependent RNA polymerase, which is responsible for the replication and transcription of the viral RNA genome using antigenomic RNA as an intermediate. During transcription, synthesizes subgenomic RNAs and assures their capping by a cap-snatching mechanism, which involves the endonuclease activity cleaving the host capped pre-mRNAs. These short capped RNAs are then used as primers for viral transcription. The 3'-end of subgenomic mRNAs molecules are heterogeneous and not polyadenylated. The replicase function is to direct synthesis of antigenomic and genomic RNA which are encapsidated and non capped. As a consequence of the use of the same enzyme for both transcription and replication, these mechanisms need to be well coordinated. These processes may be regulated by proteins N and Z in a dose-dependent manner. Z protein inhibits the viral polymerase L und thus the viral transcription and RNA synthesis. This chain is RNA-directed RNA polymerase L, found in Hylaeamys megacephalus (Large-headed rice rat).